We begin with the raw amino-acid sequence, 152 residues long: Flagellar assembly factor FliW (152 aa).

Belongs to the FliW family. In terms of assembly, interacts with translational regulator CsrA and flagellin(s).

The protein localises to the cytoplasm. Functionally, acts as an anti-CsrA protein, binds CsrA and prevents it from repressing translation of its target genes, one of which is flagellin. Binds to flagellin and participates in the assembly of the flagellum. This is Flagellar assembly factor FliW from Desulfitobacterium hafniense (strain Y51).